The primary structure comprises 159 residues: 2-C-methyl-D-erythritol 2,4-cyclodiphosphate synthase (159 aa).

Residues Asp-10 and His-12 each coordinate a divalent metal cation. Residues 10-12 (DVH) and 36-37 (HS) contribute to the 4-CDP-2-C-methyl-D-erythritol 2-phosphate site. His-44 provides a ligand contact to a divalent metal cation. 4-CDP-2-C-methyl-D-erythritol 2-phosphate is bound by residues 58–60 (DIG), 63–67 (FPDTD), 102–108 (AQAPKMA), 134–137 (TTTE), Phe-141, and Arg-144.

It belongs to the IspF family. Homotrimer. It depends on a divalent metal cation as a cofactor.

The enzyme catalyses 4-CDP-2-C-methyl-D-erythritol 2-phosphate = 2-C-methyl-D-erythritol 2,4-cyclic diphosphate + CMP. It functions in the pathway isoprenoid biosynthesis; isopentenyl diphosphate biosynthesis via DXP pathway; isopentenyl diphosphate from 1-deoxy-D-xylulose 5-phosphate: step 4/6. Functionally, involved in the biosynthesis of isopentenyl diphosphate (IPP) and dimethylallyl diphosphate (DMAPP), two major building blocks of isoprenoid compounds. Catalyzes the conversion of 4-diphosphocytidyl-2-C-methyl-D-erythritol 2-phosphate (CDP-ME2P) to 2-C-methyl-D-erythritol 2,4-cyclodiphosphate (ME-CPP) with a corresponding release of cytidine 5-monophosphate (CMP). The chain is 2-C-methyl-D-erythritol 2,4-cyclodiphosphate synthase from Shewanella halifaxensis (strain HAW-EB4).